We begin with the raw amino-acid sequence, 90 residues long: Photosystem I reaction center subunit PsaK 2 (90 aa).

The next 2 membrane-spanning stretches (helical) occupy residues 20 to 42 (LSVGIIMCLCNVFAFVIGYFAIQ) and 67 to 89 (LATMSFGHILGAGMVLGLASSGI).

Belongs to the PsaG/PsaK family.

The protein localises to the cellular thylakoid membrane. The protein is Photosystem I reaction center subunit PsaK 2 (psaK2) of Synechocystis sp. (strain ATCC 27184 / PCC 6803 / Kazusa).